The sequence spans 286 residues: 2-hydroxy-6-oxo-6-phenylhexa-2,4-dienoate hydrolase (286 aa).

Substrate is bound by residues 42–43 (GG), Asn-51, Asn-111, Ser-180, and Arg-190. Catalysis depends on His-265, which acts as the Proton acceptor. A substrate-binding site is contributed by Trp-266.

This sequence belongs to the AB hydrolase superfamily. BphD family. As to quaternary structure, homodimer.

The enzyme catalyses 2,6-dioxo-6-phenylhexa-3-enoate + H2O = 2-oxopent-4-enoate + benzoate + H(+). Its pathway is xenobiotic degradation; biphenyl degradation; 2-hydroxy-2,4-pentadienoate and benzoate from biphenyl: step 4/4. Its activity is regulated as follows. Inhibited by 3-Cl HOPDA. Catalyzes an unusual C-C bond hydrolysis of 2-hydroxy-6-oxo-6-phenylhexa-2,4-dienoic acid (HOPDA) to produce benzoic acid and 2-hydroxy-2,4-pentadienoic acid (HPD). This is 2-hydroxy-6-oxo-6-phenylhexa-2,4-dienoate hydrolase (bphD) from Paraburkholderia xenovorans (strain LB400).